Reading from the N-terminus, the 187-residue chain is Potassium-transporting ATPase KdpC subunit (187 aa).

The chain crosses the membrane as a helical span at residues L10–G30.

Belongs to the KdpC family. In terms of assembly, the system is composed of three essential subunits: KdpA, KdpB and KdpC.

Its subcellular location is the cell inner membrane. Its function is as follows. Part of the high-affinity ATP-driven potassium transport (or Kdp) system, which catalyzes the hydrolysis of ATP coupled with the electrogenic transport of potassium into the cytoplasm. This subunit acts as a catalytic chaperone that increases the ATP-binding affinity of the ATP-hydrolyzing subunit KdpB by the formation of a transient KdpB/KdpC/ATP ternary complex. This Parvibaculum lavamentivorans (strain DS-1 / DSM 13023 / NCIMB 13966) protein is Potassium-transporting ATPase KdpC subunit.